We begin with the raw amino-acid sequence, 130 residues long: MRHRNGLRKLNRTSSHRLAMFRNLTNSLLEHEIIKTTLPKAKELRRVVEPVITLGKNPSLAGKRLAFDRLRNRDNVIKIFSELGPRYQNRNGGYIRILKCGFRRGDNAPMAIVELLDRPEAGIISNDSAD.

The protein belongs to the bacterial ribosomal protein bL17 family. As to quaternary structure, part of the 50S ribosomal subunit. Contacts protein L32.

The sequence is that of Large ribosomal subunit protein bL17 from Nitrosomonas europaea (strain ATCC 19718 / CIP 103999 / KCTC 2705 / NBRC 14298).